The following is a 184-amino-acid chain: Putative manganese efflux pump MntP (184 aa).

A run of 5 helical transmembrane segments spans residues 39-59, 65-85, 102-122, 132-152, and 161-181; these read IFGV…LSFV, IDHF…ILEA, LALG…TFSF, LIIG…GKIL, and LVLG…THLV.

This sequence belongs to the MntP (TC 9.B.29) family.

It is found in the cell inner membrane. Its function is as follows. Probably functions as a manganese efflux pump. The chain is Putative manganese efflux pump MntP from Campylobacter curvus (strain 525.92).